The chain runs to 290 residues: MADLDDIKDGKDFGLDRPQQHKAFYLKGSGALDWGMQSRLADIFNPKTGKTIMLAFDHGYFQGPTTGLERIDLHIAPLFEYTDVLMCTRGILRSVVPPETRKPVVLRASGANSILTELSNEAVAVSVEDALRLNVSAMAAQVYIGSEHEHQSIKNIIQLVDQGTRYGMPTMAVTGVGKDMARDQRYFSLATRIAAEMGAHIIKTYYVDKGFERITAGCPVPIVIAGGKKLPEREALEMCYQAIDQGALGVDMGRNIFQSEAPIAMLKAVHAVVHGGETAEKAYQLYLDEK.

Catalysis depends on K203, which acts as the Schiff-base intermediate with substrate.

This sequence belongs to the DeoC/FbaB aldolase family.

This is an uncharacterized protein from Pasteurella multocida (strain Pm70).